Consider the following 116-residue polypeptide: SEGRSRLLGAPVPVRENDEGLQRALQFAMAEYNKASNDKYSSRVVRIISAKQQLVSGIKYIMEVEIGRTTCPKSSADLQSCEFHDEPEMAKYTTCNFVVYSIPWLNQIKLLKSSCQ.

Residues Q53–G57 carry the Secondary area of contact motif. Cystine bridges form between C71–C81 and C95–C115. Position 80 is a phosphoserine (S80).

It belongs to the cystatin family.

The protein localises to the secreted. In terms of biological role, this protein binds tightly to and inhibits papain and cathepsin B. The polypeptide is Cystatin (Coturnix japonica (Japanese quail)).